The following is a 372-amino-acid chain: Protein phosphatase Mn(2+)-dependent 1K (372 aa).

The N-terminal 29 residues, 1-29 (MLSTAFITLVRSGRNQVKKRVLLSSILLQ), are a transit peptide targeting the mitochondrion. The interval 46 to 61 (RCSRFDPDGSGQPATW) is critical for association with the BCKDH complex. Residues 94-346 (NVGCASLIGK…DNSTAVVVPF (253 aa)) enclose the PPM-type phosphatase domain. Residues aspartate 127 and glycine 128 each coordinate Mn(2+). Serine 248 is subject to Phosphoserine. Mn(2+) is bound by residues aspartate 298 and aspartate 337.

It belongs to the PP2C family. As to quaternary structure, interacts with E1 and E2 components of the branched-chain alpha-ketoacid dehydrogenase (BCKDH) complex. Interacts with both BCKDHA and BCKDHB chains of the E1 subunit. Interacts with the 24-meric DBT/E2 core of the BCKD complex with a 1:1 stoichiometry; the N-terminal region (residues 49-61) of PPM1K and C-terminal linker of the lipoyl domain of DBT/E2 (residues 145-160) are critical for this interaction whereas the lipoyl prosthetic group is dispensable. Competes with BCKDK for binding to DBT/E2; this interaction is modulated by branched-chain alpha-keto acids (BCKAs). At steady state, BCKDH holoenzyme preferentially binds BCKDK and BCKDHA/E1 is phosphorylated. In response to high levels of BCKAs, BCKDK is replaced by PPM1K leading to BCKDHA/E1 dephosphorylation. Mn(2+) serves as cofactor.

It is found in the mitochondrion matrix. The enzyme catalyses O-phospho-L-seryl-[3-methyl-2-oxobutanoate dehydrogenase] + H2O = L-seryl-[3-methyl-2-oxobutanoate dehydrogenase] + phosphate. It catalyses the reaction O-phospho-L-seryl-[protein] + H2O = L-seryl-[protein] + phosphate. It participates in protein modification. Its function is as follows. Serine/threonine-protein phosphatase component of macronutrients metabolism. Together with BCKDK serves as a metabolic regulatory node that coordinates branched-chain amino acids (BCAAs) and protein synthesis with glucose and lipid metabolism via two distinct phosphoprotein targets: BCKDHA/E1a subunit of the branched-chain alpha-ketoacid dehydrogenase (BCKDH) complex and ACLY, a lipogenic enzyme of Krebs cycle. At high levels of branched-chain ketoacids (BCKAs), dephosphorylates and activates mitochondrial BCKDH complex, a multisubunit complex consisting of three components, heterotetrameric E1 composed of BCKDHA and BCKDHB chains, 24-meric E2 core composed of DBT and homodimeric E3 composed of DLD, each involved in different steps of BCAA catabolism. Tightly associates with the E2 subunit of BCKDH complex and dephosphorylates Ser-333 of BCKDHA chain of the E1 subunit likely through on-off binding to individual E2 subunits of the 24-meric E2 core to increase the efficiency of the dephosphorylation reaction. Appears to dephosphorylate and inactivate cytosolic ACLY in response to changes of cellular carbohydrate abundance. Overnutrition and in particular high-fructose diet, activates MLXIPL/ChREBP leading to increased BCKDK to PPM1K ratio, phosphorylation of ACLY on Ser-454 and activation of its enzymatic activity that ultimately results in the generation of acetyl-CoA and malonyl-CoA immediate substrates of de novo lipogenesis. Recognizes phosphosites having SxS or RxxS motifs and strictly depends on Mn(2+) ions for the phosphatase activity. Regulates Ca(2+)-induced opening of mitochondrial transition pore and apoptotic cell death. The chain is Protein phosphatase Mn(2+)-dependent 1K (Ppm1k) from Rattus norvegicus (Rat).